The sequence spans 396 residues: Aspartate aminotransferase (396 aa).

L-aspartate-binding residues include glycine 34, tryptophan 130, and asparagine 183. Lysine 246 is subject to N6-(pyridoxal phosphate)lysine. Position 374 (arginine 374) interacts with L-aspartate.

The protein belongs to the class-I pyridoxal-phosphate-dependent aminotransferase family. As to quaternary structure, homodimer. Pyridoxal 5'-phosphate serves as cofactor.

It localises to the cytoplasm. It carries out the reaction L-aspartate + 2-oxoglutarate = oxaloacetate + L-glutamate. In Salmonella typhi, this protein is Aspartate aminotransferase (aspC).